Reading from the N-terminus, the 582-residue chain is tRNA-guanine(15) transglycosylase (582 aa).

D95 functions as the Nucleophile in the catalytic mechanism. Residues D130 and G196 each coordinate substrate. The Zn(2+) site is built by C279, C281, and C284. Residues 507-582 (RMRVVVNKEA…RAVKVRKGVE (76 aa)) form the PUA domain.

This sequence belongs to the archaeosine tRNA-ribosyltransferase family. As to quaternary structure, homodimer. Requires Zn(2+) as cofactor.

The enzyme catalyses guanosine(15) in tRNA + 7-cyano-7-deazaguanine = 7-cyano-7-carbaguanosine(15) in tRNA + guanine. The protein operates within tRNA modification; archaeosine-tRNA biosynthesis. Its function is as follows. Exchanges the guanine residue with 7-cyano-7-deazaguanine (preQ0) at position 15 in the dihydrouridine loop (D-loop) of archaeal tRNAs. This Pyrococcus horikoshii (strain ATCC 700860 / DSM 12428 / JCM 9974 / NBRC 100139 / OT-3) protein is tRNA-guanine(15) transglycosylase (tgtA).